Reading from the N-terminus, the 24-residue chain is Caerulein precursor fragment B4 (24 aa).

Expressed by the skin glands.

Its subcellular location is the secreted. In terms of biological role, has antibacterial and antifungal activity. This chain is Caerulein precursor fragment B4, found in Xenopus borealis (Kenyan clawed frog).